The chain runs to 975 residues: Protein bicaudal D homolog 1 (975 aa).

2 coiled-coil regions span residues methionine 1–isoleucine 265 and serine 319–glutamate 496. Disordered regions lie at residues serine 383–alanine 403, arginine 545–serine 616, aspartate 800–glutamate 824, leucine 836–leucine 877, and aspartate 922–proline 975. 2 stretches are compositionally biased toward basic and acidic residues: residues lysine 385–alanine 403 and valine 581–lysine 590. The segment covering proline 592–proline 602 has biased composition (polar residues). Residues isoleucine 663–glutamine 803 adopt a coiled-coil conformation. Residues isoleucine 663–glutamine 803 are interaction with RAB6A. Residues glutamine 840–leucine 877 show a composition bias toward polar residues.

This sequence belongs to the BicD family. As to quaternary structure, interacts with RAB6A. Interacts (via C-terminus) with RAB6B (GTP-bound); the interaction is direct. Interacts with CLIP-115 and KIFC2. (Microbial infection) Interacts with human cytomegalovirus/HHV-5 protein UL32. As to expression, expressed in the brain, heart and skeletal muscle.

The protein localises to the golgi apparatus. In terms of biological role, regulates coat complex coatomer protein I (COPI)-independent Golgi-endoplasmic reticulum transport by recruiting the dynein-dynactin motor complex. This is Protein bicaudal D homolog 1 (BICD1) from Homo sapiens (Human).